The chain runs to 238 residues: Ribonuclease PH (238 aa).

Residues Arg-86 and 124–126 (GTR) each bind phosphate.

The protein belongs to the RNase PH family. Homohexameric ring arranged as a trimer of dimers.

It carries out the reaction tRNA(n+1) + phosphate = tRNA(n) + a ribonucleoside 5'-diphosphate. Its function is as follows. Phosphorolytic 3'-5' exoribonuclease that plays an important role in tRNA 3'-end maturation. Removes nucleotide residues following the 3'-CCA terminus of tRNAs; can also add nucleotides to the ends of RNA molecules by using nucleoside diphosphates as substrates, but this may not be physiologically important. Probably plays a role in initiation of 16S rRNA degradation (leading to ribosome degradation) during starvation. The sequence is that of Ribonuclease PH from Vibrio parahaemolyticus serotype O3:K6 (strain RIMD 2210633).